A 371-amino-acid chain; its full sequence is D-alanine--D-alanine ligase (371 aa).

One can recognise an ATP-grasp domain in the interval 154–361; it reads KKLLVAEGLP…YPTLLAAMVD (208 aa). 182 to 237 serves as a coordination point for ATP; sequence RERLGLPVFVKPARGGSSIGVSRVSDWAELPAAIEAARRHDPKVIVEAGIAGRELE. The Mg(2+) site is built by Asp-316, Glu-328, and Asn-330.

Belongs to the D-alanine--D-alanine ligase family. Requires Mg(2+) as cofactor. It depends on Mn(2+) as a cofactor.

The protein resides in the cytoplasm. The enzyme catalyses 2 D-alanine + ATP = D-alanyl-D-alanine + ADP + phosphate + H(+). Its pathway is cell wall biogenesis; peptidoglycan biosynthesis. Its function is as follows. Cell wall formation. The chain is D-alanine--D-alanine ligase from Mycobacterium sp. (strain JLS).